The primary structure comprises 748 residues: Structure-specific endonuclease subunit SLX4 (748 aa).

Residues 62 to 75 (KSVTAQKSPMTQET) are compositionally biased toward polar residues. The disordered stretch occupies residues 62–104 (KSVTAQKSPMTQETTKNDTERNKDVDKSCNPVSTSHPDLGGSN). T72 bears the Phosphothreonine; by ATR and ATM mark. Residues 76-88 (TKNDTERNKDVDK) show a composition bias toward basic and acidic residues. Phosphothreonine; by ATR and ATM is present on T113. 2 disordered regions span residues 215–236 (IKTQNEGNSDKPPRARNNKGEK) and 277–303 (EKSSNSLDNQESSQQRLWTASQLPPEL). The span at 222-236 (NSDKPPRARNNKGEK) shows a compositional bias: basic and acidic residues. Over residues 277 to 298 (EKSSNSLDNQESSQQRLWTASQ) the composition is skewed to polar residues. Residue S289 is modified to Phosphoserine; by ATR and ATM. T319 bears the Phosphothreonine; by ATR and ATM mark. 2 positions are modified to phosphoserine; by ATR and ATM: S329 and S355. Over residues 591–602 (ISTKDSTQNPTT) the composition is skewed to polar residues. Residues 591–610 (ISTKDSTQNPTTSNDIIDTS) are disordered.

The protein belongs to the SLX4 family. In terms of assembly, forms a heterodimer with SLX1. Interacts with RAD1; catalytic subunit of the RAD1-RAD10 endonuclease. Interacts with RTT107. Phosphorylated by ATR (MEC1) and ATM (TEL1) upon DNA damage. This appears to be required for the function with the RAD1-RAD10 endonuclease.

It is found in the nucleus. The protein localises to the cytoplasm. Regulatory subunit that interacts with and increases the activity of different structure-specific endonucleases. Has several distinct roles in protecting genome stability by resolving diverse forms of deleterious DNA structures. Component of the SLX1-SLX4 structure-specific endonuclease that resolves DNA secondary structures generated during DNA repair and recombination. Has endonuclease activity towards branched DNA substrates, introducing single-strand cuts in duplex DNA close to junctions with ss-DNA. Has a preference for simple Y, 5'-flap and replication fork-like structures. It cleaves the strand bearing the 5'-non-homologous arm at the branch site junction and generates ligatable, nicked products from the 5'-flap or replication fork substrates. Plays a critical role in maintaining the integrity of the ribosomal DNA (rDNA) loci, where it has a role in re-starting stalled replication forks. Has Holliday junction resolvase activity in vitro. Interacts with the structure-specific RAD1-RAD10 endonuclease and promotes RAD1-RAD10-dependent 3'-non-homologous tail removal (NHTR) during repair of double-strand breaks by single-strand annealing. SLX4 also promotes recovery from DNA-alkylation-induced replisome stalling during DNA replication by facilitating the error-free mode of lesion bypass. This does not require SLX1 or RAD1-RAD10, but probably RTT107. The polypeptide is Structure-specific endonuclease subunit SLX4 (Saccharomyces cerevisiae (strain RM11-1a) (Baker's yeast)).